The sequence spans 344 residues: C-C chemokine receptor-like 2 (344 aa).

The Extracellular portion of the chain corresponds to 1-43 (MANYTLAPEDEYDVLIEGELESDEAEQCDRYDTWALSAQLVPS). N-linked (GlcNAc...) asparagine glycosylation occurs at Asn-3. Residues 44 to 64 (LCSAVFVVGVLDNLLVVLILV) form a helical membrane-spanning segment. Over 65–74 (KYKGLKRVEN) the chain is Cytoplasmic. Residues 75–95 (IYLLNLAVSNLCFLLTLPFWA) form a helical membrane-spanning segment. The Extracellular portion of the chain corresponds to 96 to 104 (HAGGDPMCK). A disulfide bond links Cys-103 and Cys-181. The chain crosses the membrane as a helical span at residues 105–125 (ILIGLYFVGLYSETFFNCLLT). The Cytoplasmic segment spans residues 126 to 148 (LQRYLVFLHKGNFFSVRRRVPCG). Residues 149-169 (IVTSAVAWVTAILATVPEFAV) form a helical membrane-spanning segment. Residues 170-198 (YKPQMEDPKYKCAFSRTPFLPADETFWKH) are Extracellular-facing. Residues 199-219 (FLTLKMNVSVLVFPLFIFTFL) traverse the membrane as a helical segment. Residues 220–238 (YVQMRKTLRFGEQRYSLFK) are Cytoplasmic-facing. Residues 239-259 (LVFAIMVVFLLMWAPYNIALF) form a helical membrane-spanning segment. The Extracellular segment spans residues 260–281 (LSTFKEHFSLSDCKSNYNLDKS). The chain crosses the membrane as a helical span at residues 282–302 (VLITKLIATTHCCVNPLLYVF). Residues 303–344 (LDGTFRKYLCRFFHRRSNTPRQPRRRFAQGTSREEPDRSTEV) are Cytoplasmic-facing. A disordered region spans residues 323 to 344 (RQPRRRFAQGTSREEPDRSTEV). Basic and acidic residues predominate over residues 334–344 (SREEPDRSTEV).

The protein belongs to the G-protein coupled receptor 1 family.

The protein localises to the cell membrane. Functionally, receptor for CCL19 and chemerin/RARRES2. Does not appear to be a signaling receptor, but may have a role in modulating chemokine-triggered immune responses by capturing and internalizing CCL19 or by presenting RARRES2 ligand to CMKLR1, a functional signaling receptor. Plays a critical role for the development of Th2 responses. This chain is C-C chemokine receptor-like 2 (CCRL2), found in Macaca mulatta (Rhesus macaque).